The sequence spans 1895 residues: Probable WRKY transcription factor 19 (1895 aa).

Residues methionine 1–asparagine 85 are disordered. The span at threonine 10–aspartate 22 shows a compositional bias: polar residues. Over residues glycine 28–serine 39 the composition is skewed to low complexity. The span at methionine 46–cysteine 62 shows a compositional bias: polar residues. A compositionally biased stretch (low complexity) spans serine 75–asparagine 85. Residues arginine 291 to glutamate 371 form the PAH domain. Positions alanine 408–proline 417 are enriched in polar residues. 3 disordered regions span residues alanine 408–leucine 442, tyrosine 517–serine 538, and glutamate 580–serine 620. The segment covering serine 418–serine 427 has biased composition (low complexity). A compositionally biased stretch (polar residues) spans glycine 428 to leucine 442. A DNA-binding region (WRKY 1) is located at residues asparagine 462–proline 526. The WRKY 2 DNA-binding region spans serine 635–tyrosine 700. A TIR domain is found at lysine 666–leucine 808. In terms of domain architecture, NB-ARC spans isoleucine 800 to valine 1087. ATP is bound at residue glycine 844–threonine 851. 10 LRR repeats span residues lysine 1206–glutamate 1227, asparagine 1228–arginine 1249, lysine 1259–threonine 1281, asparagine 1282–leucine 1304, lysine 1306–glutamate 1328, serine 1329–valine 1351, lysine 1352–leucine 1371, leucine 1373–leucine 1395, histidine 1397–methionine 1419, and cysteine 1421–leucine 1442. Residues glutamate 1562–threonine 1583 are disordered. One can recognise a Protein kinase domain in the interval tryptophan 1626–valine 1877. ATP-binding positions include leucine 1632–valine 1640 and lysine 1654. The active site involves aspartate 1758.

The protein belongs to the disease resistance X-TIR-NB-LRR-X family.

The protein localises to the nucleus. In terms of biological role, transcription factor. Interacts specifically with the W box (5'-(T)TGAC[CT]-3'), a frequently occurring elicitor-responsive cis-acting element. May act also as a disease resistance protein with a serine/threonine-protein kinase activity. The protein is Probable WRKY transcription factor 19 (WRKY19) of Arabidopsis thaliana (Mouse-ear cress).